Consider the following 359-residue polypeptide: Membrane-bound lytic murein transglycosylase C (359 aa).

The signal sequence occupies residues 1–16 (MKKYLALALIAPLLIS). The N-palmitoyl cysteine moiety is linked to residue cysteine 17. Cysteine 17 carries S-diacylglycerol cysteine lipidation.

The protein belongs to the transglycosylase Slt family.

Its subcellular location is the cell outer membrane. It catalyses the reaction Exolytic cleavage of the (1-&gt;4)-beta-glycosidic linkage between N-acetylmuramic acid (MurNAc) and N-acetylglucosamine (GlcNAc) residues in peptidoglycan, from either the reducing or the non-reducing ends of the peptidoglycan chains, with concomitant formation of a 1,6-anhydrobond in the MurNAc residue.. Murein-degrading enzyme. May play a role in recycling of muropeptides during cell elongation and/or cell division. In Escherichia coli (strain SMS-3-5 / SECEC), this protein is Membrane-bound lytic murein transglycosylase C.